Here is a 21-residue protein sequence, read N- to C-terminus: Natriuretic peptide TsNP (21 aa).

The cysteines at positions 5 and 21 are disulfide-linked.

In terms of tissue distribution, expressed by the venom gland.

The protein resides in the secreted. Its function is as follows. Scorpion venom natriuretic peptide that increases the perfusion pressure, glomerular filtration rate and urinary flow in the isolated perfused rat kidney assay. Induces a decrease of the percentages of renal transport for sodium, potassium and chloride and an increase of the urinary cGMP concentration. Also down-regulates the mRNA expression of natriuretic peptide receptor 1 (NPR1) in the kidneys whereas it up-regulates those of NPR2, NPR3 and guanylyl cyclase C (GUCY2C) mRNAs. May exhibit hypotensive and vasodepressor activities. The sequence is that of Natriuretic peptide TsNP from Tityus serrulatus (Brazilian scorpion).